The primary structure comprises 629 residues: Myotonin-protein kinase (629 aa).

The Cytoplasmic portion of the chain corresponds to Met-1–Ser-590. One can recognise a Protein kinase domain in the interval Phe-71–Phe-339. ATP is bound by residues Ile-77 to Val-85 and Lys-100. Asp-195 (proton acceptor) is an active-site residue. 2 positions are modified to phosphoserine; by autocatalysis: Ser-216 and Ser-228. Thr-234 carries the post-translational modification Phosphothreonine; by autocatalysis. The AGC-kinase C-terminal domain occupies Phe-340–Val-415. Residues Val-457–Thr-536 are a coiled coil. Residues Leu-591–Ala-611 traverse the membrane as a helical; Anchor for type IV membrane protein segment. Residues His-612 to Pro-629 are Lumenal-facing.

This sequence belongs to the protein kinase superfamily. AGC Ser/Thr protein kinase family. DMPK subfamily. Homodimer; homodimerization stimulates the kinase activity. Interacts with HSPB2; may enhance DMPK kinase activity. Interacts with PLN; phosphorylates PLN. May interact with RAC1; may regulate DMPK kinase activity. Interacts with LMNA; may regulate nuclear envelope stability. Mg(2+) is required as a cofactor. Post-translationally, phosphorylated. Autophosphorylates. Phosphorylation by RAF1 may result in activation of DMPK. In terms of processing, proteolytic processing of the C-terminus may remove the transmembrane domain and release the kinase from membranes stimulating its activity. In terms of tissue distribution, most isoforms are expressed in many tissues including heart, skeletal muscle, liver and brain, except for isoform 2 which is only found in the heart and skeletal muscle, and isoform 14 which is only found in the brain, with high levels in the striatum, cerebellar cortex and pons.

The protein localises to the endoplasmic reticulum membrane. The protein resides in the nucleus outer membrane. It localises to the mitochondrion outer membrane. It is found in the sarcoplasmic reticulum membrane. Its subcellular location is the cell membrane. The protein localises to the cytoplasm. The protein resides in the cytosol. It localises to the mitochondrion membrane. It catalyses the reaction L-seryl-[protein] + ATP = O-phospho-L-seryl-[protein] + ADP + H(+). The enzyme catalyses L-threonyl-[protein] + ATP = O-phospho-L-threonyl-[protein] + ADP + H(+). With respect to regulation, coiled-coil-mediated oligomerization enhances the catalytic activity. Proteolytic processing of the C-terminus may release the protein from membranes and constitute a mean to regulate the enzyme. May be regulated by HSPB2, RAC1, RAF1 and G-protein second messengers. In terms of biological role, non-receptor serine/threonine protein kinase which is necessary for the maintenance of skeletal muscle structure and function. May play a role in myocyte differentiation and survival by regulating the integrity of the nuclear envelope and the expression of muscle-specific genes. May also phosphorylate PPP1R12A and inhibit the myosin phosphatase activity to regulate myosin phosphorylation. Also critical to the modulation of cardiac contractility and to the maintenance of proper cardiac conduction activity probably through the regulation of cellular calcium homeostasis. Phosphorylates PLN, a regulator of calcium pumps and may regulate sarcoplasmic reticulum calcium uptake in myocytes. May also phosphorylate FXYD1/PLM which is able to induce chloride currents. May also play a role in synaptic plasticity. The polypeptide is Myotonin-protein kinase (DMPK) (Homo sapiens (Human)).